A 432-amino-acid polypeptide reads, in one-letter code: Nuclear pore complex-interacting protein family member B8 (432 aa).

2 disordered regions span residues 260 to 280 (RMGR…NSLS) and 353 to 420 (SPLP…LRTR). The span at 270-280 (QQHSITDNSLS) shows a compositional bias: polar residues. The span at 374–402 (EVEKPPKPKRWRVDEVEQSPKPKRQREAE) shows a compositional bias: basic and acidic residues. A compositionally biased stretch (basic residues) spans 408–420 (KPKRRRLSKLRTR).

This sequence belongs to the NPIP family.

This Homo sapiens (Human) protein is Nuclear pore complex-interacting protein family member B8 (NPIPB8).